A 491-amino-acid polypeptide reads, in one-letter code: GTPase Der (491 aa).

EngA-type G domains lie at 54–217 and 229–402; these read PVLA…PEYS and RRIA…ESWD. GTP is bound by residues 60-67, 107-111, 169-172, 235-242, 282-286, and 347-350; these read GRPNVGKS, DTGGW, NKVD, DTAGI, and NKWD. The region spanning 403–485 is the KH-like domain; sequence RRIPTGRLNA…PIEVNMRVRE (83 aa).

This sequence belongs to the TRAFAC class TrmE-Era-EngA-EngB-Septin-like GTPase superfamily. EngA (Der) GTPase family. In terms of assembly, associates with the 50S ribosomal subunit.

GTPase that plays an essential role in the late steps of ribosome biogenesis. The protein is GTPase Der of Paenarthrobacter aurescens (strain TC1).